The primary structure comprises 911 residues: Bifunctional aspartokinase/homoserine dehydrogenase 1, chloroplastic (911 aa).

The transit peptide at 1 to 82 (MPVVSLAKVV…VENGHLPKGD (82 aa)) directs the protein to the chloroplast. Residues 83–331 (SWAVHKFGGT…VSEAVVLKTL (249 aa)) form an aspartokinase region. The segment at 332 to 557 (SYQEAWEMSY…LSRTTLAVGI (226 aa)) is interface. 2 ACT domains span residues 407 to 482 (VEGT…IIPN) and 488 to 565 (AVGQ…LIGG). The interval 558-911 (IGPGLIGGTL…RLAFYLGAPS (354 aa)) is homoserine dehydrogenase. Ile-563 and Thr-644 together coordinate NAD(+). 3 residues coordinate NADP(+): Ile-563, Thr-644, and Lys-668. The NADPH site is built by Ile-563, Thr-644, and Lys-668. Na(+) contacts are provided by Glu-695, Val-698, Ala-700, and Leu-702. Gly-753 and Glu-756 together coordinate NADP(+). Residues Glu-756 and Asp-767 each coordinate L-homoserine. The Proton donor role is filled by Lys-771. Gly-888 is an NAD(+) binding site. Position 888 (Gly-888) interacts with NADP(+). Residue Gly-888 participates in NADPH binding.

It in the N-terminal section; belongs to the aspartokinase family. In the C-terminal section; belongs to the homoserine dehydrogenase family. As to quaternary structure, homo- or heterodimer. The cofactor is a metal cation.

The protein resides in the plastid. Its subcellular location is the chloroplast. The catalysed reaction is L-homoserine + NADP(+) = L-aspartate 4-semialdehyde + NADPH + H(+). It carries out the reaction L-homoserine + NAD(+) = L-aspartate 4-semialdehyde + NADH + H(+). It catalyses the reaction L-aspartate + ATP = 4-phospho-L-aspartate + ADP. The protein operates within amino-acid biosynthesis; L-lysine biosynthesis via DAP pathway; (S)-tetrahydrodipicolinate from L-aspartate: step 1/4. It functions in the pathway amino-acid biosynthesis; L-methionine biosynthesis via de novo pathway; L-homoserine from L-aspartate: step 1/3. Its pathway is amino-acid biosynthesis; L-methionine biosynthesis via de novo pathway; L-homoserine from L-aspartate: step 3/3. It participates in amino-acid biosynthesis; L-threonine biosynthesis; L-threonine from L-aspartate: step 1/5. The protein operates within amino-acid biosynthesis; L-threonine biosynthesis; L-threonine from L-aspartate: step 3/5. With respect to regulation, inhibition of aspartate kinase activity by threonine and leucine and 3-fold activation by cysteine, isoleucine, valine, serine and alanine at 2.5 mM. Partial inhibition of homoserine dehydrogenase activity by threonine and cysteine (14% of activity remaining at saturation with either amino acid). No synergy between the effectors for both activation or inhibition. Its function is as follows. Bifunctional aspartate kinase and homoserine dehydrogenase that catalyzes the first and the third steps toward the synthesis of lysine, methionine and threonine from aspartate. The protein is Bifunctional aspartokinase/homoserine dehydrogenase 1, chloroplastic of Arabidopsis thaliana (Mouse-ear cress).